A 411-amino-acid chain; its full sequence is Multifunctional CCA protein (411 aa).

Gly-8 and Arg-11 together coordinate ATP. Residues Gly-8 and Arg-11 each coordinate CTP. Residues Asp-21 and Asp-23 each coordinate Mg(2+). 3 residues coordinate ATP: Arg-91, Arg-137, and Arg-140. CTP-binding residues include Arg-91, Arg-137, and Arg-140. An HD domain is found at Ser-228–Trp-333.

This sequence belongs to the tRNA nucleotidyltransferase/poly(A) polymerase family. Bacterial CCA-adding enzyme type 1 subfamily. Monomer. Can also form homodimers and oligomers. Requires Mg(2+) as cofactor. Ni(2+) is required as a cofactor.

The catalysed reaction is a tRNA precursor + 2 CTP + ATP = a tRNA with a 3' CCA end + 3 diphosphate. It catalyses the reaction a tRNA with a 3' CCA end + 2 CTP + ATP = a tRNA with a 3' CCACCA end + 3 diphosphate. Functionally, catalyzes the addition and repair of the essential 3'-terminal CCA sequence in tRNAs without using a nucleic acid template. Adds these three nucleotides in the order of C, C, and A to the tRNA nucleotide-73, using CTP and ATP as substrates and producing inorganic pyrophosphate. tRNA 3'-terminal CCA addition is required both for tRNA processing and repair. Also involved in tRNA surveillance by mediating tandem CCA addition to generate a CCACCA at the 3' terminus of unstable tRNAs. While stable tRNAs receive only 3'-terminal CCA, unstable tRNAs are marked with CCACCA and rapidly degraded. The sequence is that of Multifunctional CCA protein from Actinobacillus pleuropneumoniae serotype 5b (strain L20).